Consider the following 244-residue polypeptide: 23S rRNA (guanosine-2'-O-)-methyltransferase RlmB (244 aa).

S-adenosyl-L-methionine contacts are provided by Gly-196, Ile-216, and Leu-225.

It belongs to the class IV-like SAM-binding methyltransferase superfamily. RNA methyltransferase TrmH family. RlmB subfamily. As to quaternary structure, homodimer.

The protein localises to the cytoplasm. The catalysed reaction is guanosine(2251) in 23S rRNA + S-adenosyl-L-methionine = 2'-O-methylguanosine(2251) in 23S rRNA + S-adenosyl-L-homocysteine + H(+). Functionally, specifically methylates the ribose of guanosine 2251 in 23S rRNA. The polypeptide is 23S rRNA (guanosine-2'-O-)-methyltransferase RlmB (Photorhabdus laumondii subsp. laumondii (strain DSM 15139 / CIP 105565 / TT01) (Photorhabdus luminescens subsp. laumondii)).